A 185-amino-acid chain; its full sequence is Elongation factor P (185 aa).

This sequence belongs to the elongation factor P family.

The protein resides in the cytoplasm. It participates in protein biosynthesis; polypeptide chain elongation. Functionally, involved in peptide bond synthesis. Stimulates efficient translation and peptide-bond synthesis on native or reconstituted 70S ribosomes in vitro. Probably functions indirectly by altering the affinity of the ribosome for aminoacyl-tRNA, thus increasing their reactivity as acceptors for peptidyl transferase. The sequence is that of Elongation factor P from Geobacillus kaustophilus (strain HTA426).